A 622-amino-acid chain; its full sequence is Threonine--tRNA ligase (622 aa).

The tract at residues 1–141 is editing domain; sequence MKTLLIHSDY…SRKITTERKE (141 aa). The interval 199-498 is catalytic; the sequence is PHVKYIKEKE…TLENKPPALP (300 aa). The Zn(2+) site is built by Cys-291, His-343, and His-467.

This sequence belongs to the class-II aminoacyl-tRNA synthetase family. In terms of assembly, homodimer. Zn(2+) is required as a cofactor.

The protein localises to the cytoplasm. It carries out the reaction tRNA(Thr) + L-threonine + ATP = L-threonyl-tRNA(Thr) + AMP + diphosphate + H(+). Functionally, catalyzes the attachment of threonine to tRNA(Thr) in a two-step reaction: L-threonine is first activated by ATP to form Thr-AMP and then transferred to the acceptor end of tRNA(Thr). Also edits incorrectly charged L-seryl-tRNA(Thr). The polypeptide is Threonine--tRNA ligase (Methanococcus maripaludis (strain C5 / ATCC BAA-1333)).